A 60-amino-acid polypeptide reads, in one-letter code: Potassium channel toxin alpha-KTx 15.9 (60 aa).

The first 22 residues, 1 to 22, serve as a signal peptide directing secretion; that stretch reads MKIFLPVLVMLILCSMCLLTEG. Disulfide bonds link Cys-30–Cys-51, Cys-36–Cys-56, and Cys-40–Cys-58.

Belongs to the short scorpion toxin superfamily. Potassium channel inhibitor family. Alpha-KTx 15 subfamily. Expressed by the venom gland.

Its subcellular location is the secreted. Its function is as follows. Blocker of A-type voltage-gated potassium channels of cerebellar granular cells. May also inhibit Kv4/KCND when coexpressed with DPP6 or DPP10. The occlusion of the outer entry of the K(+) conducting pore is partially reversible and affects both open and closed channels. It shares the same target in rat brain than BmTX3 (AC Q8I0L5) and AmmTX3 (AC P60208). Has been shown to weakly inhibit TRPV1 channels. The sequence is that of Potassium channel toxin alpha-KTx 15.9 from Lychas mucronatus (Chinese swimming scorpion).